The sequence spans 505 residues: RNA-splicing ligase RtcB homolog (505 aa).

Residues Asp119, Cys122, His227, and His259 each contribute to the Mn(2+) site. GMP is bound at residue 226 to 230 (NHYAE). Phosphoserine is present on Ser300. His353 contributes to the Mn(2+) binding site. GMP-binding positions include 353 to 354 (HN), 402 to 405 (GGTM), Ser409, and 428 to 431 (HGAG). His428 functions as the GMP-histidine intermediate in the catalytic mechanism. Lys496 is covalently cross-linked (Glycyl lysine isopeptide (Lys-Gly) (interchain with G-Cter in SUMO2)). Lys504 contributes to the GMP binding site.

Belongs to the RtcB family. In terms of assembly, catalytic component of the tRNA-splicing ligase complex. Requires Mn(2+) as cofactor.

Its subcellular location is the nucleus. It localises to the cytoplasm. The catalysed reaction is a 3'-end 3'-phospho-ribonucleotide-RNA + a 5'-end dephospho-ribonucleoside-RNA + GTP = a ribonucleotidyl-ribonucleotide-RNA + GMP + diphosphate. The enzyme catalyses a 3'-end 2',3'-cyclophospho-ribonucleotide-RNA + a 5'-end dephospho-ribonucleoside-RNA + GTP + H2O = a ribonucleotidyl-ribonucleotide-RNA + GMP + diphosphate + H(+). Its activity is regulated as follows. Protein archease stimulates the activity of the tRNA ligase complex with high efficiency in the presence of GTP. Functionally, catalytic subunit of the tRNA-splicing ligase complex that acts by directly joining spliced tRNA halves to mature-sized tRNAs by incorporating the precursor-derived splice junction phosphate into the mature tRNA as a canonical 3',5'-phosphodiester. May act as an RNA ligase with broad substrate specificity, and may function toward other RNAs. The chain is RNA-splicing ligase RtcB homolog from Homo sapiens (Human).